An 865-amino-acid chain; its full sequence is Protein translocase subunit SecA (865 aa).

Residues Gln93, 111 to 115 (GEGKT), and Asp501 contribute to the ATP site. Residues Cys841, Cys843, Cys852, and Cys853 each contribute to the Zn(2+) site.

This sequence belongs to the SecA family. As to quaternary structure, monomer and homodimer. Part of the essential Sec protein translocation apparatus which comprises SecA, SecYEG and auxiliary proteins SecDF-YajC and YidC. Requires Zn(2+) as cofactor.

The protein localises to the cell inner membrane. Its subcellular location is the cytoplasm. It carries out the reaction ATP + H2O + cellular proteinSide 1 = ADP + phosphate + cellular proteinSide 2.. Its function is as follows. Part of the Sec protein translocase complex. Interacts with the SecYEG preprotein conducting channel. Has a central role in coupling the hydrolysis of ATP to the transfer of proteins into and across the cell membrane, serving as an ATP-driven molecular motor driving the stepwise translocation of polypeptide chains across the membrane. The protein is Protein translocase subunit SecA of Helicobacter pylori (strain ATCC 700392 / 26695) (Campylobacter pylori).